The chain runs to 187 residues: Lysozyme C-like protein DDB_G0288143 (187 aa).

The signal sequence occupies residues 1–23 (MKVSNLISTITIASALCLSLTNA). Disulfide bonds link Cys50-Cys125, Cys74-Cys82, and Cys78-Cys97. Glu55 is a catalytic residue. Positions 133–187 (QHGSHSSTSRDSSSSSSRDSTGTGYSSSGSGTSGSGSNSGQTGHFIPGQSGHGLN) are disordered. Positions 136 to 175 (SHSSTSRDSSSSSSRDSTGTGYSSSGSGTSGSGSNSGQTG) are enriched in low complexity.

It belongs to the glycosyl hydrolase 22 family.

The polypeptide is Lysozyme C-like protein DDB_G0288143 (Dictyostelium discoideum (Social amoeba)).